An 89-amino-acid chain; its full sequence is uncharacterized protein (89 aa).

A disordered region spans residues 31 to 89 (TPQPLEPHEHPKPMEPNEFDPKPDDPPRNPDPSPFPNEVPKPKPSDFPIPDELYPQPIV). A compositionally biased stretch (basic and acidic residues) spans 36 to 58 (EPHEHPKPMEPNEFDPKPDDPPR). The span at 59–69 (NPDPSPFPNEV) shows a compositional bias: pro residues.

This is an uncharacterized protein from Dictyostelium discoideum (Social amoeba).